A 397-amino-acid chain; its full sequence is Phosphopentomutase (397 aa).

Residues Asp12, Asp289, His294, Asp330, His331, and His342 each coordinate Mn(2+).

The protein belongs to the phosphopentomutase family. Mn(2+) serves as cofactor.

It is found in the cytoplasm. It carries out the reaction 2-deoxy-alpha-D-ribose 1-phosphate = 2-deoxy-D-ribose 5-phosphate. The enzyme catalyses alpha-D-ribose 1-phosphate = D-ribose 5-phosphate. It participates in carbohydrate degradation; 2-deoxy-D-ribose 1-phosphate degradation; D-glyceraldehyde 3-phosphate and acetaldehyde from 2-deoxy-alpha-D-ribose 1-phosphate: step 1/2. In terms of biological role, isomerase that catalyzes the conversion of deoxy-ribose 1-phosphate (dRib-1-P) and ribose 1-phosphate (Rib-1-P) to deoxy-ribose 5-phosphate (dRib-5-P) and ribose 5-phosphate (Rib-5-P), respectively. The sequence is that of Phosphopentomutase from Limosilactobacillus reuteri (strain DSM 20016) (Lactobacillus reuteri).